The primary structure comprises 253 residues: Ubiquinone/menaquinone biosynthesis C-methyltransferase UbiE (253 aa).

Residues Thr-76, Asp-97, 125–126 (NA), and Ser-142 contribute to the S-adenosyl-L-methionine site.

This sequence belongs to the class I-like SAM-binding methyltransferase superfamily. MenG/UbiE family.

It catalyses the reaction a 2-demethylmenaquinol + S-adenosyl-L-methionine = a menaquinol + S-adenosyl-L-homocysteine + H(+). The catalysed reaction is a 2-methoxy-6-(all-trans-polyprenyl)benzene-1,4-diol + S-adenosyl-L-methionine = a 5-methoxy-2-methyl-3-(all-trans-polyprenyl)benzene-1,4-diol + S-adenosyl-L-homocysteine + H(+). It functions in the pathway quinol/quinone metabolism; menaquinone biosynthesis; menaquinol from 1,4-dihydroxy-2-naphthoate: step 2/2. Its pathway is cofactor biosynthesis; ubiquinone biosynthesis. Its function is as follows. Methyltransferase required for the conversion of demethylmenaquinol (DMKH2) to menaquinol (MKH2) and the conversion of 2-polyprenyl-6-methoxy-1,4-benzoquinol (DDMQH2) to 2-polyprenyl-3-methyl-6-methoxy-1,4-benzoquinol (DMQH2). The chain is Ubiquinone/menaquinone biosynthesis C-methyltransferase UbiE from Xanthomonas oryzae pv. oryzae (strain MAFF 311018).